Consider the following 215-residue polypeptide: Ran-specific GTPase-activating protein 1 (215 aa).

2 stretches are compositionally biased toward basic and acidic residues: residues 1 to 18 and 26 to 35; these read MSAE…EEQK and VASKQTEEAK. The segment at 1–78 is disordered; it reads MSAEQEKKTQ…ASPEVHFEPI (78 aa). At S70 the chain carries Phosphoserine. The RanBD1 domain maps to 74 to 210; that stretch reads HFEPIVKLSA…FEKYQEENAK (137 aa).

It belongs to the RANBP1 family.

It is found in the cytoplasm. Functionally, stimulates the GTPase activity in the presence of RNA1. May potentiate the action of RanGAP1 (RNA1), thus playing the role of a negative regulator. In Schizosaccharomyces pombe (strain 972 / ATCC 24843) (Fission yeast), this protein is Ran-specific GTPase-activating protein 1 (sbp1).